The sequence spans 765 residues: MFNITNIQSTARHQSISNEASTEVPLKEEIWNKISAFFSSEHQVEAQNCIAYLCHPPETASPEEIKSKFECLRMLAFPAYADNIQYSRGGADQYCILSENSQEILSIVFNTEGYTVEGGGKSVTYTRVTESEQASSASGSKDAVNYELIWSEWVKEAPAKEAANREEAVQRMRDCLKNNKTELRLKILGLTTIPAYIPEQITTLILDNNELKSLPENLQGNIKTLYANSNQLTSIPATLPDTIQEMELSINRITELPERLPSALQSLDLFHNKISCLPENLPEELRYLSVYDNSIRTLPAHLPSEITHLNVQSNSLTALPETLPPGLKTLEAGENALTSLPASLPPELQVLDVSKNQITVLPETLPPTITTLDVSRNALTNLPENLPAALQIMQASRNNLVRLPESLPHFRGEGPQPTRIIVEYNPFSERTIQNMQRLMSSVDYQGPRVLFAMGDFSIVRVTRPLHQAVQGWLTSLEEEDVNQWRAFEAEANAAAFSGFLDYLGDTQNTRHPDFKEQVSAWLMRLAEDSALRETVFIIAMNATISCEDRVTLAYHQMQEATLVHDAERGAFDSHLAELIMAGREIFRLEQIESLAREKVKRLFFIDEVEVFLGFQNQLRESLSLTTMTRDMRFYNVSGITESDLDEAEIRIKMAENRDFHKWFALWGPWHKVLERIAPEEWREMMAKRDECIETDEYQSRVNAELEDLRIADDSDAERTTEVQMDAERAIGIKIMEEINQTLFTEIMENILLKKEVSSLMSAYWR.

An interaction with target proteins region spans residues 1–453 (MFNITNIQST…YQGPRVLFAM (453 aa)). LRR repeat units follow at residues 200 to 219 (QITT…ENLQ), 221 to 242 (NIKT…LPDT), 243 to 262 (IQEM…RLPS), 263 to 284 (ALQS…LPEE), 285 to 305 (LRYL…LPSE), 306 to 325 (ITHL…TLPP), 326 to 346 (GLKT…SLPP), 347 to 368 (ELQV…LPPT), 369 to 389 (ITTL…LPAA), and 390 to 410 (LQIM…LPHF). The linker stretch occupies residues 454–461 (GDFSIVRV). The E3 ubiquitin-protein ligase catalytic domain stretch occupies residues 462–765 (TRPLHQAVQG…VSSLMSAYWR (304 aa)). The 295-residue stretch at 464–758 (PLHQAVQGWL…NILLKKEVSS (295 aa)) folds into the NEL domain. Cys546 serves as the catalytic Glycyl thioester intermediate.

This sequence belongs to the LRR-containing bacterial E3 ligase family. Interacts with host TXN. Ubiquitinated in the presence of host E1 ubiquitin-activating enzyme, E2 ubiquitin-conjugating enzyme and ubiquitin.

The protein localises to the secreted. It localises to the host cytoplasm. The catalysed reaction is S-ubiquitinyl-[E2 ubiquitin-conjugating enzyme]-L-cysteine + [acceptor protein]-L-lysine = [E2 ubiquitin-conjugating enzyme]-L-cysteine + N(6)-ubiquitinyl-[acceptor protein]-L-lysine.. In terms of biological role, effector proteins function to alter host cell physiology and promote bacterial survival in host tissues. This protein is an E3 ubiquitin ligase that interferes with host's ubiquitination pathway. Can ubiquitinate both ubiquitin and host TXN (thioredoxin). Leads to significant decrease of thioredoxin activity and increase of host cell death. This is E3 ubiquitin-protein ligase SlrP (slrP) from Salmonella typhimurium (strain 14028s / SGSC 2262).